A 134-amino-acid chain; its full sequence is ATP synthase epsilon chain, chloroplastic (134 aa).

It belongs to the ATPase epsilon chain family. F-type ATPases have 2 components, CF(1) - the catalytic core - and CF(0) - the membrane proton channel. CF(1) has five subunits: alpha(3), beta(3), gamma(1), delta(1), epsilon(1). CF(0) has three main subunits: a, b and c.

The protein resides in the plastid. It localises to the chloroplast thylakoid membrane. Its function is as follows. Produces ATP from ADP in the presence of a proton gradient across the membrane. The protein is ATP synthase epsilon chain, chloroplastic of Chlorella vulgaris (Green alga).